Reading from the N-terminus, the 236-residue chain is 7-cyano-7-deazaguanine synthase (236 aa).

Residue Cys-7–Ala-17 coordinates ATP. Zn(2+) contacts are provided by Cys-185, Cys-193, Cys-196, and Cys-199.

The protein belongs to the QueC family. Zn(2+) is required as a cofactor.

The enzyme catalyses 7-carboxy-7-deazaguanine + NH4(+) + ATP = 7-cyano-7-deazaguanine + ADP + phosphate + H2O + H(+). The protein operates within purine metabolism; 7-cyano-7-deazaguanine biosynthesis. Functionally, catalyzes the ATP-dependent conversion of 7-carboxy-7-deazaguanine (CDG) to 7-cyano-7-deazaguanine (preQ(0)). This is 7-cyano-7-deazaguanine synthase from Rhizobium meliloti (strain 1021) (Ensifer meliloti).